The primary structure comprises 458 residues: Ig mu chain C region secreted form (458 aa).

The tract at residues 1–106 is CH1; it reads VSLSSPTLYP…SNRDLRVSFP (106 aa). A disulfide bridge links C28 with C90. N46 and N114 each carry an N-linked (GlcNAc...) asparagine glycan. The segment at 107 to 222 is CH2; sequence VDSELPPNVS…VSMSSECSTT (116 aa). C137 and C200 are disulfide-bonded. 4 N-linked (GlcNAc...) asparagine glycosylation sites follow: N212, N261, N277, and N284. A CH3 region spans residues 223 to 327; the sequence is PSPGIQVFPI…PLKHTISKSR (105 aa). Disulfide bonds link C249-C308 and C356-C418. Positions 328 to 458 are CH4; the sequence is EVAKHPPAVY…IMSDTASTCY (131 aa). N-linked (GlcNAc...) asparagine glycosylation occurs at N445.

It is found in the secreted. The protein is Ig mu chain C region secreted form of Oryctolagus cuniculus (Rabbit).